The primary structure comprises 872 residues: Alanine--tRNA ligase (872 aa).

Residues H567, H571, C669, and H673 each contribute to the Zn(2+) site.

This sequence belongs to the class-II aminoacyl-tRNA synthetase family. Requires Zn(2+) as cofactor.

The protein localises to the cytoplasm. The enzyme catalyses tRNA(Ala) + L-alanine + ATP = L-alanyl-tRNA(Ala) + AMP + diphosphate. Its function is as follows. Catalyzes the attachment of alanine to tRNA(Ala) in a two-step reaction: alanine is first activated by ATP to form Ala-AMP and then transferred to the acceptor end of tRNA(Ala). Also edits incorrectly charged Ser-tRNA(Ala) and Gly-tRNA(Ala) via its editing domain. This is Alanine--tRNA ligase from Streptococcus pyogenes serotype M1.